Reading from the N-terminus, the 408-residue chain is MNFKFARFKSIFNILFILIIAFPGGLIYLLTGSTLSFWLRESDFDKITIGLFGLVNFIHIFKFLWGPLLEKISFSTLSNRGYKYCLVITLINCIFCVYVLTSFNPNTNFIPFVLCLVVLAFFSSIYDMLIQSSQMLLITDKNWGISEAACTTGFRIGILISGSGALYLSTIISWQDVYRTMAILCIPSLLLIIFYPLKFKDKIIDNDFDRFLNAFYDFIKKPKCIVIISFMLLYRLQDSFLSIMPNMFYLDIGYTKQDLAVGYKAFGMCATIFGGVIGGFLCRKYEYSYLLKRVLIYHALSSLSFIYLYFLNQDITSLYIAVFCQEFTKGLTMSPFFSYQLKCCSSRYCITQIALITSITNVGTILIGSISGYAATYLGWSYFFIVAGLCFIPAYILILYLPKTINSV.

11 consecutive transmembrane segments (helical) span residues 11 to 31 (IFNI…YLLT), 49 to 69 (IGLF…GPLL), 84 to 104 (YCLV…TSFN), 110 to 130 (IPFV…DMLI), 154 to 174 (FRIG…IISW), 177 to 197 (VYRT…FYPL), 224 to 244 (CIVI…LSIM), 261 to 281 (VGYK…GGFL), 294 to 311 (VLIY…LYFL), 353 to 373 (IALI…ISGY), and 382 to 402 (YFFI…LYLP).

The protein belongs to the major facilitator superfamily.

The protein localises to the cell inner membrane. The protein is Putative transporter AmpG 2 (ampG2) of Rickettsia prowazekii (strain Madrid E).